The primary structure comprises 315 residues: Probable integrase/recombinase aq_aa09 (315 aa).

One can recognise a Core-binding (CB) domain in the interval 1-78; that stretch reads MEHFIDTYLY…EVRLFYEWLQ (78 aa). The Tyr recombinase domain occupies 106 to 313; it reads SKKKYYSDDE…REKQLEAILE (208 aa). Residues arginine 150, lysine 186, histidine 263, arginine 266, and histidine 289 contribute to the active site. Tyrosine 299 acts as the O-(3'-phospho-DNA)-tyrosine intermediate in catalysis.

The protein belongs to the 'phage' integrase family.

Functionally, may function as an integrase. This is Probable integrase/recombinase aq_aa09 from Aquifex aeolicus (strain VF5).